We begin with the raw amino-acid sequence, 78 residues long: Translational regulator CsrA (78 aa).

Belongs to the CsrA/RsmA family. As to quaternary structure, homodimer; the beta-strands of each monomer intercalate to form a hydrophobic core, while the alpha-helices form wings that extend away from the core.

The protein resides in the cytoplasm. Its function is as follows. A translational regulator that binds mRNA to regulate translation initiation and/or mRNA stability. Usually binds in the 5'-UTR at or near the Shine-Dalgarno sequence preventing ribosome-binding, thus repressing translation. Its main target seems to be the major flagellin gene, while its function is anatagonized by FliW. This Desulfotalea psychrophila (strain LSv54 / DSM 12343) protein is Translational regulator CsrA.